A 295-amino-acid chain; its full sequence is 4-hydroxy-tetrahydrodipicolinate synthase (295 aa).

Residue Thr-47 coordinates pyruvate. Tyr-135 acts as the Proton donor/acceptor in catalysis. Lys-163 functions as the Schiff-base intermediate with substrate in the catalytic mechanism. Ile-204 contacts pyruvate.

Belongs to the DapA family. As to quaternary structure, homotetramer; dimer of dimers.

It is found in the cytoplasm. The catalysed reaction is L-aspartate 4-semialdehyde + pyruvate = (2S,4S)-4-hydroxy-2,3,4,5-tetrahydrodipicolinate + H2O + H(+). The protein operates within amino-acid biosynthesis; L-lysine biosynthesis via DAP pathway; (S)-tetrahydrodipicolinate from L-aspartate: step 3/4. Functionally, catalyzes the condensation of (S)-aspartate-beta-semialdehyde [(S)-ASA] and pyruvate to 4-hydroxy-tetrahydrodipicolinate (HTPA). The polypeptide is 4-hydroxy-tetrahydrodipicolinate synthase (Caldicellulosiruptor bescii (strain ATCC BAA-1888 / DSM 6725 / KCTC 15123 / Z-1320) (Anaerocellum thermophilum)).